The primary structure comprises 416 residues: MYLQGFGNYHHSEAVKGALPPNQNSPQHCNLGLYAEQLSGTAFTRPRHNNLRSWLYRILPTVTQGTYYPYEFNIMHSFVDEFSPNAMRWSPLYNSSQIKCDFVEGLFHIAGSPLVNTYTYYCNHSMSDKYFANNDGELLFVPYAGEIHLYTEFGKLMLSSGSIAVIPRGVKFKVEVISKEAKGYLCENSGNPLTLPQLGPIGANGLANPRHFQYPVAAFEDSGGEHTIICKNQKKLWFTVCNHSPLNVVAWHGNYAPYCYDLSLFNTINTVSFDHPDPSIFTVLTSESEIPGVSNLDFVIFPPRWMVAEHTFRPPYFHRNYMNELMGLVYGEYDAKKEGFIPGGISIHNCMTPHGPDYESYEIAASQDLKPNYINSLAFMFETKDYWQVTEQAYRHPSRQVDYLNCWQGFKVEFSQ.

The active-site Proton acceptor is the His-275. Fe cation-binding residues include His-318 and Glu-324. 2 residues coordinate homogentisate: Tyr-333 and His-354. Position 354 (His-354) interacts with Fe cation.

This sequence belongs to the homogentisate dioxygenase family. As to quaternary structure, hexamer; dimer of trimers. It depends on Fe cation as a cofactor.

The catalysed reaction is homogentisate + O2 = 4-maleylacetoacetate + H(+). Its pathway is amino-acid degradation; L-phenylalanine degradation; acetoacetate and fumarate from L-phenylalanine: step 4/6. Involved in the catabolism of homogentisate (2,5-dihydroxyphenylacetate or 2,5-OH-PhAc), a central intermediate in the degradation of phenylalanine and tyrosine. Catalyzes the oxidative ring cleavage of the aromatic ring of homogentisate to yield maleylacetoacetate. The chain is Homogentisate 1,2-dioxygenase from Legionella pneumophila (strain Corby).